Reading from the N-terminus, the 190-residue chain is Peptidyl-tRNA hydrolase (190 aa).

Tyr14 lines the tRNA pocket. His19 functions as the Proton acceptor in the catalytic mechanism. Residues Tyr63, Asn65, and Asn112 each contribute to the tRNA site.

This sequence belongs to the PTH family. As to quaternary structure, monomer.

Its subcellular location is the cytoplasm. It catalyses the reaction an N-acyl-L-alpha-aminoacyl-tRNA + H2O = an N-acyl-L-amino acid + a tRNA + H(+). Its function is as follows. Hydrolyzes ribosome-free peptidyl-tRNAs (with 1 or more amino acids incorporated), which drop off the ribosome during protein synthesis, or as a result of ribosome stalling. Catalyzes the release of premature peptidyl moieties from peptidyl-tRNA molecules trapped in stalled 50S ribosomal subunits, and thus maintains levels of free tRNAs and 50S ribosomes. This is Peptidyl-tRNA hydrolase from Kosmotoga olearia (strain ATCC BAA-1733 / DSM 21960 / TBF 19.5.1).